The primary structure comprises 267 residues: Glutamate racemase (267 aa).

Residues 10-11 (DS) and 42-43 (YG) contribute to the substrate site. Cysteine 73 (proton donor/acceptor) is an active-site residue. A substrate-binding site is contributed by 74–75 (NT). Catalysis depends on cysteine 183, which acts as the Proton donor/acceptor. 184 to 185 (TH) lines the substrate pocket.

Belongs to the aspartate/glutamate racemases family.

The enzyme catalyses L-glutamate = D-glutamate. Its pathway is cell wall biogenesis; peptidoglycan biosynthesis. Provides the (R)-glutamate required for cell wall biosynthesis. The polypeptide is Glutamate racemase (Limosilactobacillus reuteri (strain DSM 20016) (Lactobacillus reuteri)).